The following is a 457-amino-acid chain: PDZ and LIM domain protein 7 (457 aa).

A PDZ domain is found at 1–85 (MDSFKVVLEG…RLSLGLSRAQ (85 aa)). S78 bears the Phosphoserine mark. Disordered stretches follow at residues 82–142 (SRAQ…LVPD), 176–226 (TEFM…PWAV), and 239–258 (TSTV…LQSR). R103 carries the post-translational modification Asymmetric dimethylarginine. S111 is modified (phosphoserine). Over residues 208–221 (EPWPGPTAPSPTSR) the composition is skewed to pro residues. At S247 the chain carries Phosphoserine. 3 consecutive LIM zinc-binding domains span residues 280 to 338 (PVCH…VRYA), 339 to 398 (PSCA…MFGT), and 399 to 457 (KCHG…FSHV).

In terms of assembly, binds via its LIM zinc-binding 3 domain (LIM 3) to endocytic codes of INSR, but not with those of IGF1R, LDLR, TFRC, or EGFR. Interacts with various PKC isoforms through the LIM zinc-binding domains. Binds to RET in a phosphorylation-independent manner via its LIM zinc-binding domain 2 (LIM 2). Probably part of a complex with SHC and the RET dimer. Interacts with TPM2. Interacts with TBX4 and TBX5. Isoform 1 and isoform 2 are expressed ubiquitously, however, isoform 2 predominates in skeletal muscle, isoform 1 is more abundant in lung, spleen, leukocytes and fetal liver.

The protein resides in the cytoplasm. Its subcellular location is the cytoskeleton. May function as a scaffold on which the coordinated assembly of proteins can occur. May play a role as an adapter that, via its PDZ domain, localizes LIM-binding proteins to actin filaments of both skeletal muscle and nonmuscle tissues. Involved in both of the two fundamental mechanisms of bone formation, direct bone formation (e.g. embryonic flat bones mandible and cranium), and endochondral bone formation (e.g. embryonic long bone development). Plays a role during fracture repair. Involved in BMP6 signaling pathway. The polypeptide is PDZ and LIM domain protein 7 (PDLIM7) (Homo sapiens (Human)).